The chain runs to 394 residues: Elongation factor Tu 1 (394 aa).

A tr-type G domain is found at 10–204 (KPHVNVGTIG…ALDSYIPEPQ (195 aa)). Residues 19–26 (GHVDHGKT) are G1. Residue 19-26 (GHVDHGKT) coordinates GTP. Position 26 (Thr-26) interacts with Mg(2+). The G2 stretch occupies residues 60–64 (GITIN). A G3 region spans residues 81-84 (DCPG). GTP-binding positions include 81–85 (DCPGH) and 136–139 (NKCD). The interval 136–139 (NKCD) is G4. Residues 174–176 (SAL) are G5.

This sequence belongs to the TRAFAC class translation factor GTPase superfamily. Classic translation factor GTPase family. EF-Tu/EF-1A subfamily. As to quaternary structure, monomer.

The protein resides in the cytoplasm. The catalysed reaction is GTP + H2O = GDP + phosphate + H(+). Its function is as follows. GTP hydrolase that promotes the GTP-dependent binding of aminoacyl-tRNA to the A-site of ribosomes during protein biosynthesis. The polypeptide is Elongation factor Tu 1 (Shewanella baltica (strain OS195)).